We begin with the raw amino-acid sequence, 214 residues long: Guanylate kinase (214 aa).

In terms of domain architecture, Guanylate kinase-like spans 12 to 191 (GLMLVMSSPS…SIAAVQAILA (180 aa)). Residue 19–26 (SPSGAGKT) coordinates ATP.

It belongs to the guanylate kinase family.

The protein localises to the cytoplasm. It catalyses the reaction GMP + ATP = GDP + ADP. Essential for recycling GMP and indirectly, cGMP. The chain is Guanylate kinase from Paramagnetospirillum magneticum (strain ATCC 700264 / AMB-1) (Magnetospirillum magneticum).